The primary structure comprises 469 residues: 6-phosphofructo-2-kinase/fructose-2,6-bisphosphatase 4 (469 aa).

The tract at residues 1–249 (MASPRELTQN…YYLMNIHVTP (249 aa)) is 6-phosphofructo-2-kinase. 46-54 (GLPARGKTY) serves as a coordination point for ATP. The beta-D-fructose 6-phosphate site is built by arginine 79 and arginine 103. The active site involves aspartate 129. Residues threonine 131 and arginine 137 each coordinate beta-D-fructose 6-phosphate. Residue cysteine 159 is part of the active site. Position 168–173 (168–173 (NIVQVK)) interacts with ATP. Residues lysine 173, arginine 194, and tyrosine 198 each coordinate beta-D-fructose 6-phosphate. Residues 250 to 469 (RSIYLCRHGE…EALVTVPAHQ (220 aa)) are fructose-2,6-bisphosphatase. Arginine 256 is a binding site for beta-D-fructose 2,6-bisphosphate. The active-site Tele-phosphohistidine intermediate is histidine 257. 3 residues coordinate beta-D-fructose 2,6-bisphosphate: asparagine 263, glycine 269, and arginine 306. Glutamate 326 (proton donor/acceptor) is an active-site residue. Beta-D-fructose 2,6-bisphosphate-binding residues include tyrosine 337, arginine 351, lysine 355, tyrosine 366, glutamine 392, and arginine 396. 348-351 (FALR) serves as a coordination point for ATP. ATP-binding positions include 392–396 (QAVMR) and tyrosine 428. Threonine 444 carries the post-translational modification Phosphothreonine; by PKC.

It in the C-terminal section; belongs to the phosphoglycerate mutase family. As to quaternary structure, homodimer.

It catalyses the reaction beta-D-fructose 2,6-bisphosphate + H2O = beta-D-fructose 6-phosphate + phosphate. The enzyme catalyses beta-D-fructose 6-phosphate + ATP = beta-D-fructose 2,6-bisphosphate + ADP + H(+). With respect to regulation, the most important regulatory mechanism of these opposing activities is by phosphorylation and dephosphorylation of the enzyme. Its function is as follows. Synthesis and degradation of fructose 2,6-bisphosphate. The protein is 6-phosphofructo-2-kinase/fructose-2,6-bisphosphatase 4 (PFKFB4) of Macaca fascicularis (Crab-eating macaque).